The sequence spans 309 residues: MDISEGNKTLVTEFVLTGLTDRPWLHVLFFVVFLVVYLITMVGNLGLIVLIWNDPHLHMPMYLFLGGLAFSDACTSTSITPRMLVNFLDKTAMISLAECITQFYFFASSATTECFLLVMMAYDRYVAICNPLLYPVMMSNKLSAQLLSISYVIGFLHPLVHVSLLLRLTFCRFNIIHYFYCEILQLFKISCNGPSINALMIFIFGAFIQIPTLMTIIISYTRVLFDILKKKSEKGRSKAFSTCGAHLLSVSLYYGTLIFMYVRPASGLAEDQDKVYSLFYTIIIPLLNPFIYSLRNKKVMHALRRVIRK.

Topologically, residues 1 to 27 (MDISEGNKTLVTEFVLTGLTDRPWLHV) are extracellular. Residue N7 is glycosylated (N-linked (GlcNAc...) asparagine). Residues 28–48 (LFFVVFLVVYLITMVGNLGLI) traverse the membrane as a helical segment. The Cytoplasmic portion of the chain corresponds to 49 to 56 (VLIWNDPH). A helical transmembrane segment spans residues 57 to 77 (LHMPMYLFLGGLAFSDACTST). The Extracellular segment spans residues 78-101 (SITPRMLVNFLDKTAMISLAECIT). C99 and C191 form a disulfide bridge. A helical transmembrane segment spans residues 102–122 (QFYFFASSATTECFLLVMMAY). Topologically, residues 123–135 (DRYVAICNPLLYP) are cytoplasmic. The helical transmembrane segment at 136-156 (VMMSNKLSAQLLSISYVIGFL) threads the bilayer. The Extracellular portion of the chain corresponds to 157 to 198 (HPLVHVSLLLRLTFCRFNIIHYFYCEILQLFKISCNGPSINA). The chain crosses the membrane as a helical span at residues 199-219 (LMIFIFGAFIQIPTLMTIIIS). The Cytoplasmic portion of the chain corresponds to 220–239 (YTRVLFDILKKKSEKGRSKA). Residues 240-260 (FSTCGAHLLSVSLYYGTLIFM) form a helical membrane-spanning segment. The Extracellular segment spans residues 261-273 (YVRPASGLAEDQD). The chain crosses the membrane as a helical span at residues 274–294 (KVYSLFYTIIIPLLNPFIYSL). At 295 to 309 (RNKKVMHALRRVIRK) the chain is on the cytoplasmic side.

This sequence belongs to the G-protein coupled receptor 1 family.

Its subcellular location is the cell membrane. Its function is as follows. Odorant receptor. This Homo sapiens (Human) protein is Olfactory receptor 5AC2 (OR5AC2).